Consider the following 146-residue polypeptide: Large ribosomal subunit protein uL15 (146 aa).

The interval 1–57 (MDLSNLKAAEGSVHSDNFRRGRGHGSGNGKTAGKGHKGQKARSGAPRPGFEGGQMPL) is disordered.

The protein belongs to the universal ribosomal protein uL15 family. Part of the 50S ribosomal subunit.

Its function is as follows. Binds to the 23S rRNA. This is Large ribosomal subunit protein uL15 from Agathobacter rectalis (strain ATCC 33656 / DSM 3377 / JCM 17463 / KCTC 5835 / VPI 0990) (Eubacterium rectale).